The chain runs to 908 residues: 26S proteasome non-ATPase regulatory subunit 2 (908 aa).

Position 1 is an N-acetylmethionine (M1). A disordered region spans residues 1-52 (MEEGGRDKAPVQPQQSPAAAPGGTDEKPSGKERRDAGDKDKEQELSEEDKQL). Residues 10-21 (PVQPQQSPAAAP) show a composition bias toward low complexity. S16 carries the phosphoserine modification. T24 carries the post-translational modification Phosphothreonine. Basic and acidic residues predominate over residues 24-52 (TDEKPSGKERRDAGDKDKEQELSEEDKQL). Residues S29 and S147 each carry the phosphoserine modification. Y194 is modified (phosphotyrosine). 2 positions are modified to phosphoserine: S361 and S363. PC repeat units lie at residues 409–442 (SAAASLGMILLWDVDGGLTQIDKYLYSSEDYIKS), 443–479 (GALLACGIVNSGVRNECDPALALLSDYVLHNSNTMRL), 480–514 (GSIFGLGLAYAGSNREDVLTLLLPVMGDSKSSMEV), 517–551 (VTALACGMIAVGSCNGDVTSTILQTIMEKSETELK), and 560–589 (LGLGLNHLGKGEAIEAILAALEVVSEPFRS). K551 carries the post-translational modification N6-acetyllysine. The span at 623-643 (KEKEEDKDKKEKKDKDKKEAP) shows a compositional bias: basic and acidic residues. The segment at 623–645 (KEKEEDKDKKEKKDKDKKEAPAD) is disordered. PC repeat units follow at residues 692–723 (LALALISVSNPRLNILDTLSKFSHDADPEVSY) and 742–757 (AAMLRQLAQYHAKDPN). The segment at 708–903 (DTLSKFSHDA…LEGFVILRKN (196 aa)) is required for interaction with UBLCP1.

Belongs to the proteasome subunit S2 family. In terms of assembly, component of the 19S proteasome regulatory particle complex. The 26S proteasome consists of a 20S core particle (CP) and two 19S regulatory subunits (RP). The regulatory particle is made of a lid composed of 9 subunits, a base containing 6 ATPases and few additional components including PSMD2. Interacts with RPGRIP1L. Interacts with CRY1 in a KDM8-dependent manner. Interacts (via C-terminus) with phosphatase UBLCP1 (via ubiquitin-like domain); the interaction recruits UBLCP1 to the 19S regulatory particle where it dephosphorylates 19S subunit PSMC2/RPT1 which impairs PSMC2 ATPase activity and disrupts 26S proteasome assembly. In terms of tissue distribution, found in skeletal muscle, liver, heart, brain, kidney, pancreas, lung and placenta.

Component of the 26S proteasome, a multiprotein complex involved in the ATP-dependent degradation of ubiquitinated proteins. This complex plays a key role in the maintenance of protein homeostasis by removing misfolded or damaged proteins, which could impair cellular functions, and by removing proteins whose functions are no longer required. Therefore, the proteasome participates in numerous cellular processes, including cell cycle progression, apoptosis, or DNA damage repair. In terms of biological role, binds to the intracellular domain of tumor necrosis factor type 1 receptor. The binding domain of TRAP1 and TRAP2 resides outside the death domain of TNFR1. This chain is 26S proteasome non-ATPase regulatory subunit 2 (PSMD2), found in Homo sapiens (Human).